An 869-amino-acid chain; its full sequence is Retrovirus-related Pol polyprotein from type-1 retrotransposable element R2 (869 aa).

Residues 199–475 form the Reverse transcriptase domain; it reads IFVFYGRVPS…DLWKYLGVVY (277 aa). A nucleic acid-binding endonuclease region spans residues 601–869; it reads LYASISHSCK…FNNVTTVVHW (269 aa).

It carries out the reaction DNA(n) + a 2'-deoxyribonucleoside 5'-triphosphate = DNA(n+1) + diphosphate. This Bradysia coprophila (Dark-winged fungus gnat) protein is Retrovirus-related Pol polyprotein from type-1 retrotransposable element R2.